The primary structure comprises 316 residues: L-lactate dehydrogenase 3 (316 aa).

4 residues coordinate NAD(+): Val16, Asp37, Arg42, and Tyr68. Arg91 is a substrate binding site. NAD(+)-binding positions include Ser104, 121–123, and Thr146; that span reads ASN. Residue 123 to 126 participates in substrate binding; that stretch reads NPVD. 151–154 serves as a coordination point for substrate; that stretch reads DSSR. Beta-D-fructose 1,6-bisphosphate is bound by residues Arg156 and His171. His178 serves as the catalytic Proton acceptor. Thr233 lines the substrate pocket.

It belongs to the LDH/MDH superfamily. LDH family. Homotetramer.

It is found in the cytoplasm. It carries out the reaction (S)-lactate + NAD(+) = pyruvate + NADH + H(+). It participates in fermentation; pyruvate fermentation to lactate; (S)-lactate from pyruvate: step 1/1. Allosterically activated by fructose 1,6-bisphosphate (FBP). Catalyzes the conversion of lactate to pyruvate. The protein is L-lactate dehydrogenase 3 of Bacillus anthracis.